The following is a 36-amino-acid chain: Alpha-conotoxin-like Pu1.3 (36 aa).

A propeptide spanning residues 1–21 (SDGRNAGADRKGFGLISQMFK) is cleaved from the precursor. Intrachain disulfides connect cysteine 24/cysteine 30 and cysteine 25/cysteine 36.

Belongs to the conotoxin A superfamily. Expressed by the venom duct.

Its subcellular location is the secreted. Alpha-conotoxins act on postsynaptic membranes, they bind to the nicotinic acetylcholine receptors (nAChR) and thus inhibit them. This is Alpha-conotoxin-like Pu1.3 from Conus pulicarius (Flea-bitten cone).